The chain runs to 297 residues: Protoheme IX farnesyltransferase 1 (297 aa).

The next 9 helical transmembrane spans lie at 23-43 (VVVL…RAGV), 45-65 (WSVL…AAVV), 93-113 (LPAL…LLVF), 117-137 (LTAW…TGFL), 145-165 (IVIG…AVSG), 171-191 (PLLL…ALAI), 216-236 (LHIL…YAIH), 241-261 (LYLV…WVLY), and 277-297 (IGYL…LLNL).

Belongs to the UbiA prenyltransferase family. Protoheme IX farnesyltransferase subfamily.

It localises to the cell inner membrane. It catalyses the reaction heme b + (2E,6E)-farnesyl diphosphate + H2O = Fe(II)-heme o + diphosphate. It functions in the pathway porphyrin-containing compound metabolism; heme O biosynthesis; heme O from protoheme: step 1/1. Functionally, converts heme B (protoheme IX) to heme O by substitution of the vinyl group on carbon 2 of heme B porphyrin ring with a hydroxyethyl farnesyl side group. This is Protoheme IX farnesyltransferase 1 from Pseudomonas putida (strain ATCC 47054 / DSM 6125 / CFBP 8728 / NCIMB 11950 / KT2440).